We begin with the raw amino-acid sequence, 216 residues long: Refilin-B (216 aa).

The disordered stretch occupies residues 1-52; it reads MVGRLSLQDVPELVDTKKKGDGVLDSPDSGLPPSPSPSHWGLAAATGGGGER. 2 positions are modified to phosphoserine: Ser-6 and Ser-26.

The protein belongs to the Refilin family. Interacts with FLNA and FLNB.

It is found in the cytoplasm. The protein resides in the cytoskeleton. Involved in the regulation of the perinuclear actin network and nuclear shape through interaction with filamins. Plays an essential role in the formation of cartilaginous skeletal elements. This is Refilin-B from Rattus norvegicus (Rat).